The chain runs to 90 residues: Major mite allergen Der p 23 (90 aa).

Positions 1 to 21 are cleaved as a signal peptide; the sequence is MKFNIIIVFISLAILVHSSYA. A disordered region spans residues 22-42; that stretch reads ANDNDDDPTTTVHPTTTEQPD. The segment covering 30–39 has biased composition (low complexity); the sequence is TTTVHPTTTE. The Chitin-binding type-2 domain maps to 44 to 90; it reads KFECPSRFGYFADPKDPHKFYICSNWEAVHKDCPGNTRWNEDEETCT. Cystine bridges form between cysteine 47/cysteine 66 and cysteine 76/cysteine 89. Positions 52-90 are important for IgE-binding; that stretch reads GYFADPKDPHKFYICSNWEAVHKDCPGNTRWNEDEETCT.

Monomer. In terms of tissue distribution, expressed in epithelial cells of the midgut.

The protein resides in the secreted. Its subcellular location is the endoplasmic reticulum. It localises to the cytoplasmic vesicle. In terms of biological role, does not bind chitin in vitro. The polypeptide is Major mite allergen Der p 23 (Dermatophagoides pteronyssinus (European house dust mite)).